A 310-amino-acid chain; its full sequence is Glycine--tRNA ligase alpha subunit (310 aa).

The protein belongs to the class-II aminoacyl-tRNA synthetase family. As to quaternary structure, tetramer of two alpha and two beta subunits.

The protein resides in the cytoplasm. It carries out the reaction tRNA(Gly) + glycine + ATP = glycyl-tRNA(Gly) + AMP + diphosphate. This Aliivibrio salmonicida (strain LFI1238) (Vibrio salmonicida (strain LFI1238)) protein is Glycine--tRNA ligase alpha subunit.